Consider the following 644-residue polypeptide: Exoribonuclease 2 (644 aa).

One can recognise an RNB domain in the interval Arg-189–Lys-516. An S1 motif domain is found at Asn-561–Ala-643.

Belongs to the RNR ribonuclease family. RNase II subfamily.

Its subcellular location is the cytoplasm. It catalyses the reaction Exonucleolytic cleavage in the 3'- to 5'-direction to yield nucleoside 5'-phosphates.. Functionally, involved in mRNA degradation. Hydrolyzes single-stranded polyribonucleotides processively in the 3' to 5' direction. The polypeptide is Exoribonuclease 2 (Salmonella typhi).